The chain runs to 83 residues: UPF0248 protein PYRAB10580 (83 aa).

This sequence belongs to the UPF0248 family.

The polypeptide is UPF0248 protein PYRAB10580 (Pyrococcus abyssi (strain GE5 / Orsay)).